The primary structure comprises 152 residues: UPF0719 transmembrane protein MT2674.1 (152 aa).

Helical transmembrane passes span 21–41 (VATVLYFLVGAAVLVAGFLMV), 62–82 (VVLAATMYVALAIVTIAAIYA), 92–112 (IGVAVYGIVGVALQGVALVIL), and 131–151 (PAVFATAVMLLAVAGVIAAAL).

This sequence belongs to the UPF0719 family.

The protein localises to the cell membrane. The protein is UPF0719 transmembrane protein MT2674.1 of Mycobacterium tuberculosis (strain CDC 1551 / Oshkosh).